Here is a 69-residue protein sequence, read N- to C-terminus: uncharacterized protein (69 aa).

The first 21 residues, 1 to 21, serve as a signal peptide directing secretion; the sequence is MNTKFILILLVLIISTIFVNS.

It localises to the secreted. This is an uncharacterized protein from Dictyostelium discoideum (Social amoeba).